Reading from the N-terminus, the 468-residue chain is H(+)/Cl(-) exchange transporter ClcA (468 aa).

At 1 to 30 (MSTRETFKISLLAKMPKDVINQFLSKDKTP) the chain is on the cytoplasmic side. A helical membrane pass occupies residues 31 to 67 (FSVLFLSLLVGILAGLVGTYFEQAVHLVSETRTDWLK). Residues 68–74 (SEIGSFL) are Periplasmic-facing. A helical transmembrane segment spans residues 75-98 (PLWLAAFLISAFLAFIGYFLVHRF). A Selectivity filter part_1 motif is present at residues 104 to 108 (GSGIP). Ser-105 serves as a coordination point for chloride. An intramembrane region (helical) is located at residues 107 to 114 (IPEIEGAM). At 115-121 (DGMRPVR) the chain is on the cytoplasmic side. A run of 2 helical transmembrane segments spans residues 122–139 (WWRVLPVKFFGGMGALGS) and 146–164 (EGPTVQMGGAVGRMISDIF). A Selectivity filter part_2 motif is present at residues 144-148 (GREGP). Residues 165–174 (RVKNEDTRHS) are Cytoplasmic-facing. 2 intramembrane regions (helical) span residues 175–187 (LLAAGAAGGLAAA) and 191–199 (PLAGIMFVI). The Cytoplasmic segment spans residues 200-212 (EEMRPQFRYTLIS). Residues 213 to 230 (VRAVIISAVAANIVFRVI) form a helical membrane-spanning segment. The Periplasmic segment spans residues 231–250 (NGQDAVITMPQYDAPELSTL). The chain crosses the membrane as a helical span at residues 251–279 (GLFLLLGALFGVFGVLFNYLITLAQDLFV). Over 280–285 (KFHRND) the chain is Cytoplasmic. The chain crosses the membrane as a helical span at residues 286–307 (RKRYLLTGSMIGGCFGLLLLYV). At 308–327 (PELTGGGISLIPTITNGGYG) the chain is on the periplasmic side. 2 helical membrane-spanning segments follow: residues 328 to 347 (AGILLLLFVGRIFTTLLCFG) and 353 to 374 (GIFAPMLALGTLFGYAFGLIAK). The Selectivity filter part_3 signature appears at 353-357 (GIFAP). Residues Ile-354 and Phe-355 each coordinate chloride. At 375 to 384 (MWFPELNIEP) the chain is on the periplasmic side. Positions 385-399 (GMFAIAGMGALFAAT) form an intramembrane region, helical. Residues 400-402 (VRA) constitute an intramembrane region (note=Loop between two helices). The helical intramembrane region spans 403 to 414 (PITGILLVIEMT). The segment at residues 415–419 (NNYHL) is an intramembrane region (note=Loop between two helices). The helical transmembrane segment at 420 to 436 (ILPLIITSLGAVIFAQL) threads the bilayer. The Cytoplasmic segment spans residues 437 to 468 (LGGQPIYSQLLHRTLKNQKLQQQDLPPQSPNS). Tyr-443 contributes to the chloride binding site.

It belongs to the chloride channel (TC 2.A.49) family. ClcA subfamily. As to quaternary structure, homodimer.

The protein resides in the cell inner membrane. The catalysed reaction is 2 chloride(in) + H(+)(out) = 2 chloride(out) + H(+)(in). In terms of biological role, proton-coupled chloride transporter. Functions as antiport system and exchanges two chloride ions for 1 proton. Probably acts as an electrical shunt for an outwardly-directed proton pump that is linked to amino acid decarboxylation, as part of the extreme acid resistance (XAR) response. This is H(+)/Cl(-) exchange transporter ClcA from Vibrio cholerae serotype O1 (strain ATCC 39315 / El Tor Inaba N16961).